The following is a 330-amino-acid chain: Aspartate--ammonia ligase (330 aa).

It belongs to the class-II aminoacyl-tRNA synthetase family. AsnA subfamily.

It localises to the cytoplasm. The catalysed reaction is L-aspartate + NH4(+) + ATP = L-asparagine + AMP + diphosphate + H(+). It functions in the pathway amino-acid biosynthesis; L-asparagine biosynthesis; L-asparagine from L-aspartate (ammonia route): step 1/1. The protein is Aspartate--ammonia ligase of Treponema pallidum (strain Nichols).